The chain runs to 3326 residues: Protein unc-80 homolog (3326 aa).

Positions 152 to 164 are enriched in polar residues; sequence IENQGSPGQPCRS. Disordered regions lie at residues 152 to 178, 243 to 267, 283 to 317, and 450 to 469; these read IENQ…RKTF, KRSS…QQGE, PKAT…RASL, and RKED…GKRR. A Phosphoserine modification is found at serine 257. Polar residues predominate over residues 283-308; it reads PKATISGCHQGNSFDGSLSSQTSQER. A Phosphoserine modification is found at serine 526. Disordered stretches follow at residues 536–560, 697–785, 967–1076, 1405–1430, and 1469–1516; these read LSAR…SHGE, RKKS…DNIP, GKKV…SRRI, EDSK…KKVP, and SSKL…LSNA. Basic and acidic residues-rich tracts occupy residues 551–560 and 699–713; these read LPDHSNSHGE and KSEN…KRPS. Residues 723–737 show a composition bias toward low complexity; it reads SSSSTSGFGAPSASG. The span at 738–770 shows a compositional bias: gly residues; sequence AGDGGGEEGGGGDGGGGGGGGDGGGGGGGGGGP. The segment covering 772 to 783 has biased composition (basic and acidic residues); that stretch reads EKNEKNQEKDDN. Residues 1038-1055 are compositionally biased toward low complexity; it reads SQSAASDTSSQSEQDTSE. Residues 1418–1429 show a composition bias toward basic and acidic residues; that stretch reads IKSDAGAEEKKV. The next 2 helical transmembrane spans lie at 2336 to 2356 and 2466 to 2486; these read PFVL…DAAN and IAAT…VEVL. The segment at 2493 to 2515 is disordered; the sequence is PQMSRSDQGHKGTTTANHTMSSG. The next 2 membrane-spanning stretches (helical) occupy residues 2853–2873 and 2899–2919; these read GLAE…LVCF and LALW…FVLL. Over residues 3010-3032 the composition is skewed to polar residues; the sequence is NTGTGTVWEQDSEPSQQASQDTL. Residues 3010–3052 form a disordered region; sequence NTGTGTVWEQDSEPSQQASQDTLSRTDEEDEENDSVSMPSVVS. Serine 3110 carries the phosphoserine modification. Disordered regions lie at residues 3122 to 3222, 3236 to 3271, and 3296 to 3326; these read LQQP…VLTS, PKQS…LSDP, and NGTE…ESHV. Positions 3127 to 3136 are enriched in basic residues; the sequence is GRKRGLRQLR. Residues 3157 to 3168 are compositionally biased toward polar residues; the sequence is LSTTRRSIQPKT. Residues 3298–3309 are compositionally biased toward polar residues; it reads TENPLLSSQFTF. The span at 3315–3326 shows a compositional bias: acidic residues; the sequence is GDTDSALDESHV.

It belongs to the unc-80 family. As to quaternary structure, NALCN complex consists of NALCN and auxiliary subunits, UNC79, UNC80 and NACL1. These auxiliary subunits are essential for the NALCN complex function. Interacts (via N-terminus half) with NALCN; this interaction facilitates NALCN surface localization. Interacts (via C-terminus) with UNC79. UNC80 bridges NALCN to UNC79. Phosphorylated on tyrosine residues. As to expression, expressed almost exclusively in the brain. Expressed in hippocampus and ventral tegmental area neurons.

The protein localises to the cell membrane. It is found in the cell projection. It localises to the dendrite. Its function is as follows. Auxiliary subunit of the NALCN sodium channel complex. The NALCN sodium channel complex is a voltage-gated ion channel responsible for the resting Na(+) permeability that controls neuronal excitability. This complex is activated by neuropeptides substance P, neurotensin. In addition, the channel is inhibited by extracellular Ca(2+) through the Ca(2+)-sensing receptor. UNC80 is essential for NALCN sensitivity to extracellular calcium. The polypeptide is Protein unc-80 homolog (Unc80) (Mus musculus (Mouse)).